A 623-amino-acid polypeptide reads, in one-letter code: Pyranose 2-oxidase (623 aa).

The N-terminal stretch at 1–28 (MSTSSSDPFFNFAKSSFRSAAAQKASAS) is a signal peptide. The propeptide occupies 29-38 (SLPPLPGPDK). Tele-8alpha-FAD histidine is present on H167. The substrate site is built by Q448 and H450. H548 acts as the Proton acceptor in catalysis. Residue N593 is part of the active site.

It belongs to the GMC oxidoreductase family. Homotetramer. Requires FAD as cofactor.

The protein localises to the periplasm. It carries out the reaction D-glucose + O2 = 2-dehydro-D-glucose + H2O2. Functionally, catalyzes the oxidation of various aldopyranoses and disaccharides on carbon-2 to the corresponding 2-keto sugars concomitant with the reduction of O(2) to H(2)O(2). Plays an important role in lignin degradation of wood rot fungi by supplying the essential cosubstrate H(2)O(2) for the ligninolytic peroxidases, lignin peroxidase and manganese-dependent peroxidase. The sequence is that of Pyranose 2-oxidase (p2ox) from Peniophora sp. (strain SG) (White-rot fungus).